The primary structure comprises 290 residues: MAGREILHKMKVGLCGSDTGRGKTKVWKNIAHGYDFVKGKAGHPMEDYVVSEFKKVDGHDLGLFAIFDGHLGHDVAKYLQTNLFDNILKEKDFWTDTKNAIRNAYISTDAVILEQSLKLGKGGSTAVTGILIDGKTLVIANVGDSRAVMSKNGVASQLSVDHEPSKEQKEIESRGGFVSNIPGDVPRVDGQLAVARAFGDKSLKIHLSSDPDIRDENIDHETEFILFASDGVWKVMSNQEAVDLIKSIKDPQAAAKELIEEAVSKQSTDDISCIVPCFLRREALSERYCR.

A PPM-type phosphatase domain is found at A31–F278. Residues D68, G69, D230, and D269 each contribute to the Mn(2+) site.

The protein belongs to the PP2C family. It depends on Mg(2+) as a cofactor. Mn(2+) is required as a cofactor.

It catalyses the reaction O-phospho-L-seryl-[protein] + H2O = L-seryl-[protein] + phosphate. The enzyme catalyses O-phospho-L-threonyl-[protein] + H2O = L-threonyl-[protein] + phosphate. Its function is as follows. May be involved in defense signaling. The polypeptide is Probable protein phosphatase 2C 20 (PPC3-1.2) (Arabidopsis thaliana (Mouse-ear cress)).